A 233-amino-acid polypeptide reads, in one-letter code: RNA-free ribonuclease P (233 aa).

Belongs to the HARP family.

It carries out the reaction Endonucleolytic cleavage of RNA, removing 5'-extranucleotides from tRNA precursor.. Its function is as follows. RNA-free RNase P that catalyzes the removal of the 5'-leader sequence from pre-tRNA to produce the mature 5'-terminus. The chain is RNA-free ribonuclease P from Methanocaldococcus jannaschii (strain ATCC 43067 / DSM 2661 / JAL-1 / JCM 10045 / NBRC 100440) (Methanococcus jannaschii).